The sequence spans 454 residues: O-phospho-L-seryl-tRNA:Cys-tRNA synthase 2 (454 aa).

Pyridoxal 5'-phosphate contacts are provided by residues 146–147, asparagine 251, and 274–276; these read AR and SGH. The residue at position 277 (lysine 277) is an N6-(pyridoxal phosphate)lysine.

The protein belongs to the SepCysS family. As to quaternary structure, homodimer. Interacts with SepRS. Pyridoxal 5'-phosphate serves as cofactor.

It catalyses the reaction O-phospho-L-seryl-tRNA(Cys) + hydrogen sulfide + H(+) = L-cysteinyl-tRNA(Cys) + phosphate. Its function is as follows. Converts O-phospho-L-seryl-tRNA(Cys) (Sep-tRNA(Cys)) to L-cysteinyl-tRNA(Cys) (Cys-tRNA(Cys)). This is O-phospho-L-seryl-tRNA:Cys-tRNA synthase 2 from Methanoregula boonei (strain DSM 21154 / JCM 14090 / 6A8).